Reading from the N-terminus, the 492-residue chain is uncharacterized protein (492 aa).

The protein belongs to the FGGY kinase family.

This is an uncharacterized protein from Escherichia coli (strain K12).